A 511-amino-acid chain; its full sequence is Nucleolar protein 58 (511 aa).

Lys-281 is covalently cross-linked (Glycyl lysine isopeptide (Lys-Gly) (interchain with G-Cter in ubiquitin)). The Nop domain maps to 283–403; it reads IAPNLTQLVG…VENRLSQLEG (121 aa). A disordered region spans residues 423–511; that stretch reads EARAYNADAD…KSKKEKKEKK (89 aa). A coiled-coil region spans residues 435-511; it reads KAASDSESDS…KSKKEKKEKK (77 aa). Residues 440–450 are compositionally biased toward acidic residues; it reads SESDSDDEEEE. Basic residues predominate over residues 471–511; it reads KKAKKEKKDKKEKKEKKEKKEKKEKKEKKEKKSKKEKKEKK.

It belongs to the NOP5/NOP56 family. In terms of assembly, interacts with SIK1/NOP56 and NOP1. Interacts with the trimethylguanosine synthase TGS1. Component of the ribosomal small subunit (SSU) processome composed of at least 40 protein subunits and snoRNA U3.

Its subcellular location is the nucleus. The protein resides in the nucleolus. Required for pre-18S rRNA processing. May bind microtubules. The sequence is that of Nucleolar protein 58 (NOP58) from Saccharomyces cerevisiae (strain ATCC 204508 / S288c) (Baker's yeast).